Consider the following 461-residue polypeptide: ATP synthase subunit beta (461 aa).

151–158 (GGAGVGKT) contributes to the ATP binding site.

This sequence belongs to the ATPase alpha/beta chains family. As to quaternary structure, F-type ATPases have 2 components, CF(1) - the catalytic core - and CF(0) - the membrane proton channel. CF(1) has five subunits: alpha(3), beta(3), gamma(1), delta(1), epsilon(1). CF(0) has three main subunits: a(1), b(2) and c(9-12). The alpha and beta chains form an alternating ring which encloses part of the gamma chain. CF(1) is attached to CF(0) by a central stalk formed by the gamma and epsilon chains, while a peripheral stalk is formed by the delta and b chains.

It localises to the cell inner membrane. It catalyses the reaction ATP + H2O + 4 H(+)(in) = ADP + phosphate + 5 H(+)(out). Its function is as follows. Produces ATP from ADP in the presence of a proton gradient across the membrane. The catalytic sites are hosted primarily by the beta subunits. The chain is ATP synthase subunit beta from Colwellia psychrerythraea (strain 34H / ATCC BAA-681) (Vibrio psychroerythus).